The following is a 291-amino-acid chain: Pyridoxal 5'-phosphate synthase subunit PdxS (291 aa).

A D-ribose 5-phosphate-binding site is contributed by Asp-23. The Schiff-base intermediate with D-ribose 5-phosphate role is filled by Lys-80. Gly-152 is a D-ribose 5-phosphate binding site. Residue Arg-164 participates in D-glyceraldehyde 3-phosphate binding. D-ribose 5-phosphate contacts are provided by residues Gly-213 and 234-235 (GS).

This sequence belongs to the PdxS/SNZ family. In terms of assembly, in the presence of PdxT, forms a dodecamer of heterodimers.

It catalyses the reaction aldehydo-D-ribose 5-phosphate + D-glyceraldehyde 3-phosphate + L-glutamine = pyridoxal 5'-phosphate + L-glutamate + phosphate + 3 H2O + H(+). The protein operates within cofactor biosynthesis; pyridoxal 5'-phosphate biosynthesis. Its function is as follows. Catalyzes the formation of pyridoxal 5'-phosphate from ribose 5-phosphate (RBP), glyceraldehyde 3-phosphate (G3P) and ammonia. The ammonia is provided by the PdxT subunit. Can also use ribulose 5-phosphate and dihydroxyacetone phosphate as substrates, resulting from enzyme-catalyzed isomerization of RBP and G3P, respectively. In Haemophilus influenzae (strain PittGG), this protein is Pyridoxal 5'-phosphate synthase subunit PdxS.